We begin with the raw amino-acid sequence, 287 residues long: 4-diphosphocytidyl-2-C-methyl-D-erythritol kinase (287 aa).

K10 is an active-site residue. An ATP-binding site is contributed by 94–104 (PVAAGLGGGSA). Residue D136 is part of the active site.

This sequence belongs to the GHMP kinase family. IspE subfamily.

It carries out the reaction 4-CDP-2-C-methyl-D-erythritol + ATP = 4-CDP-2-C-methyl-D-erythritol 2-phosphate + ADP + H(+). The protein operates within isoprenoid biosynthesis; isopentenyl diphosphate biosynthesis via DXP pathway; isopentenyl diphosphate from 1-deoxy-D-xylulose 5-phosphate: step 3/6. Functionally, catalyzes the phosphorylation of the position 2 hydroxy group of 4-diphosphocytidyl-2C-methyl-D-erythritol. This chain is 4-diphosphocytidyl-2-C-methyl-D-erythritol kinase, found in Pelotomaculum thermopropionicum (strain DSM 13744 / JCM 10971 / SI).